Consider the following 867-residue polypeptide: MAKLTPMMEQYIQIKNEYKDAFLFYRLGDFYELFYEDATRAAQELEITLTKRAGGKGDPIPMCGVPYHSAENYIKTLIDRGYKVAICEQVEDPKTAKGVVKREVVQMITPGTVMESTMLTDGENNYIGSLSHFQDGSYVIVYNDLSTGENRLAFINDGWDAVIHEFYNQPIKEIVISSNLPEELQIQLKERLNVTLSYQDEVTFNAEFRELSENLNDERLMKAFSRLLNYIQTTQKRSLHHLQKAEVIELKKYMSLDMYSKRNLELTETIMKKSKHGSLLWVLDKTVTAMGARTLKKWLERPLLSKQKINERLEVVQGFYDGFMERESLRDLLKSVYDLERLSGRIAFGNVNARDLIQLKQSLSRIPAIQETLRQFDQPEITRLAEMLIYPEQMVESLEKSIVDEPPISIKEGSLIKEGYHDQLDTYRDASRNGKKWIAQLEHQEREETGIRSLKVGYNRVFGYYIEITKPNLHLLPEGRYERRQTLTNAERFVNEELKEKEKLILEAEEKSVELEYDLFIQIRDQIKEEIPLIQQLAHIISQMDVLQSFATVSESNNYVRPDFNDEQLQVTKGRHPVVEQVMKDGTFVPNDVVFDKSQNMLLITGPNMSGKSTYMRQVALTSIMGQIGCFIPAEQATLCVFDQIFTRIGAADDLVSGQSTFMVEMLEARHAISNATDRSLILLDEIGRGTSTYDGMALAQAIVEYIHHNIAAKTLFSTHYHELTALEDSLHHLKNIHVRAEEHEGNVVFLHQIKEGAADQSYGIHVAKLADLPNELIERASVILEELEDDSNKKPTPTKDKLESGQLSFFIEESNKKKAEMPKQEKTHNNQEQSVIEDLKNVNVLDLTPLEAMNELYRLQKGLKQY.

Glycine 606–serine 613 serves as a coordination point for ATP.

The protein belongs to the DNA mismatch repair MutS family.

This protein is involved in the repair of mismatches in DNA. It is possible that it carries out the mismatch recognition step. This protein has a weak ATPase activity. The sequence is that of DNA mismatch repair protein MutS from Oceanobacillus iheyensis (strain DSM 14371 / CIP 107618 / JCM 11309 / KCTC 3954 / HTE831).